Here is a 457-residue protein sequence, read N- to C-terminus: Bifunctional protein GlmU (457 aa).

Positions 1–232 (MAKVAAIVLA…PMEVMGVNDR (232 aa)) are pyrophosphorylase. UDP-N-acetyl-alpha-D-glucosamine-binding positions include 9–12 (LAAG), Lys-23, Gln-75, and 80–81 (GT). Asp-105 provides a ligand contact to Mg(2+). Gly-142, Glu-157, Asn-172, and Asn-230 together coordinate UDP-N-acetyl-alpha-D-glucosamine. Residue Asn-230 participates in Mg(2+) binding. Residues 233–253 (VQLAEAGRIIRVRINKALMVA) form a linker region. The N-acetyltransferase stretch occupies residues 254-457 (GTTIIDPETT…NKEGWKLKNK (204 aa)). Positions 336 and 354 each coordinate UDP-N-acetyl-alpha-D-glucosamine. His-366 (proton acceptor) is an active-site residue. 2 residues coordinate UDP-N-acetyl-alpha-D-glucosamine: Tyr-369 and Asn-380. Acetyl-CoA contacts are provided by residues 389–390 (NY), Ser-408, Ala-426, and Arg-443.

It in the N-terminal section; belongs to the N-acetylglucosamine-1-phosphate uridyltransferase family. This sequence in the C-terminal section; belongs to the transferase hexapeptide repeat family. Homotrimer. The cofactor is Mg(2+).

The protein localises to the cytoplasm. The enzyme catalyses alpha-D-glucosamine 1-phosphate + acetyl-CoA = N-acetyl-alpha-D-glucosamine 1-phosphate + CoA + H(+). The catalysed reaction is N-acetyl-alpha-D-glucosamine 1-phosphate + UTP + H(+) = UDP-N-acetyl-alpha-D-glucosamine + diphosphate. The protein operates within nucleotide-sugar biosynthesis; UDP-N-acetyl-alpha-D-glucosamine biosynthesis; N-acetyl-alpha-D-glucosamine 1-phosphate from alpha-D-glucosamine 6-phosphate (route II): step 2/2. It functions in the pathway nucleotide-sugar biosynthesis; UDP-N-acetyl-alpha-D-glucosamine biosynthesis; UDP-N-acetyl-alpha-D-glucosamine from N-acetyl-alpha-D-glucosamine 1-phosphate: step 1/1. Its pathway is bacterial outer membrane biogenesis; LPS lipid A biosynthesis. In terms of biological role, catalyzes the last two sequential reactions in the de novo biosynthetic pathway for UDP-N-acetylglucosamine (UDP-GlcNAc). The C-terminal domain catalyzes the transfer of acetyl group from acetyl coenzyme A to glucosamine-1-phosphate (GlcN-1-P) to produce N-acetylglucosamine-1-phosphate (GlcNAc-1-P), which is converted into UDP-GlcNAc by the transfer of uridine 5-monophosphate (from uridine 5-triphosphate), a reaction catalyzed by the N-terminal domain. This chain is Bifunctional protein GlmU, found in Geotalea daltonii (strain DSM 22248 / JCM 15807 / FRC-32) (Geobacter daltonii).